An 85-amino-acid chain; its full sequence is Large ribosomal subunit protein bL27 (85 aa).

Residues 1–24 form a disordered region; that stretch reads MAHKKAGGSSRNGRDSHSKRLGVK.

Belongs to the bacterial ribosomal protein bL27 family.

The chain is Large ribosomal subunit protein bL27 from Nitrosomonas eutropha (strain DSM 101675 / C91 / Nm57).